The sequence spans 215 residues: Thymidylate kinase (215 aa).

An ATP-binding site is contributed by 7 to 14; it reads GMEGSGKS.

The protein belongs to the thymidylate kinase family.

It catalyses the reaction dTMP + ATP = dTDP + ADP. In terms of biological role, phosphorylation of dTMP to form dTDP in both de novo and salvage pathways of dTTP synthesis. The polypeptide is Thymidylate kinase (Nitratidesulfovibrio vulgaris (strain DSM 19637 / Miyazaki F) (Desulfovibrio vulgaris)).